The chain runs to 107 residues: Large ribosomal subunit protein mL55 (107 aa).

A mitochondrion-targeting transit peptide spans 1–16 (MLLKQLPQAVQQIRCI).

Belongs to the mitochondrion-specific ribosomal protein mL55 family. As to quaternary structure, component of the mitochondrial ribosome large subunit (39S) which comprises a 16S rRNA and about 50 distinct proteins. In terms of tissue distribution, ubiquitously expressed (at protein level).

It localises to the mitochondrion. Involved in mitochondrial biogenesis and G2/M phase cell cycle progression. This is Large ribosomal subunit protein mL55 (mRpL55) from Drosophila melanogaster (Fruit fly).